Here is a 296-residue protein sequence, read N- to C-terminus: Cobalamin trafficking protein CblD (296 aa).

A mitochondrion-targeting transit peptide spans 1–38 (MAHVLCNRARLVSYLPGFCSLVKRVINPRAFSTAGSSG). Residue K203 is modified to N6-acetyllysine.

In terms of assembly, heterodimer with MMACHC. Forms a multiprotein complex with MMACHC, MTR and MTRR.

The protein resides in the cytoplasm. It localises to the mitochondrion. Its function is as follows. Involved in cobalamin metabolism and trafficking. Plays a role in regulating the biosynthesis and the proportion of two coenzymes, methylcob(III)alamin (MeCbl) and 5'-deoxyadenosylcobalamin (AdoCbl). Promotes oxidation of cob(II)alamin bound to MMACHC. The processing of cobalamin in the cytosol occurs in a multiprotein complex composed of at least MMACHC, MMADHC, MTRR (methionine synthase reductase) and MTR (methionine synthase) which may contribute to shuttle safely and efficiently cobalamin towards MTR in order to produce methionine. The polypeptide is Cobalamin trafficking protein CblD (Mus musculus (Mouse)).